Reading from the N-terminus, the 210-residue chain is Large ribosomal subunit protein uL3 (210 aa).

A compositionally biased stretch (basic residues) spans 132–144 (GPMKHGSKYHRRP). Residues 132-152 (GPMKHGSKYHRRPGSAGAKGP) form a disordered region.

It belongs to the universal ribosomal protein uL3 family. In terms of assembly, part of the 50S ribosomal subunit. Forms a cluster with proteins L14 and L19.

Functionally, one of the primary rRNA binding proteins, it binds directly near the 3'-end of the 23S rRNA, where it nucleates assembly of the 50S subunit. This is Large ribosomal subunit protein uL3 from Heliobacterium modesticaldum (strain ATCC 51547 / Ice1).